Here is a 344-residue protein sequence, read N- to C-terminus: Dihydroorotase (344 aa).

2 residues coordinate Zn(2+): His-14 and His-16. Substrate-binding positions include 16-18 and Asn-42; that span reads HLR. Lys-99, His-136, and His-174 together coordinate Zn(2+). Lys-99 is modified (N6-carboxylysine). Residue His-136 participates in substrate binding. Leu-219 serves as a coordination point for substrate. Asp-247 contacts Zn(2+). Residue Asp-247 is part of the active site. His-251 and Ala-263 together coordinate substrate.

Belongs to the metallo-dependent hydrolases superfamily. DHOase family. Class II DHOase subfamily. In terms of assembly, homodimer. Zn(2+) serves as cofactor.

It catalyses the reaction (S)-dihydroorotate + H2O = N-carbamoyl-L-aspartate + H(+). The protein operates within pyrimidine metabolism; UMP biosynthesis via de novo pathway; (S)-dihydroorotate from bicarbonate: step 3/3. Its function is as follows. Catalyzes the reversible cyclization of carbamoyl aspartate to dihydroorotate. The chain is Dihydroorotase from Teredinibacter turnerae (strain ATCC 39867 / T7901).